The following is a 601-amino-acid chain: Probable sphingosine-1-phosphate lyase (601 aa).

N6-(pyridoxal phosphate)lysine is present on Lys360.

The protein belongs to the group II decarboxylase family. Sphingosine-1-phosphate lyase subfamily. Pyridoxal 5'-phosphate is required as a cofactor.

The enzyme catalyses sphinganine 1-phosphate = hexadecanal + phosphoethanolamine. Functionally, cleaves phosphorylated sphingoid bases (PSBs), such as sphingosine-1-phosphate, into fatty aldehydes and phosphoethanolamine. Possibly implicated in influencing the macrophage autophagy pathway. In Legionella pneumophila subsp. pneumophila (strain Philadelphia 1 / ATCC 33152 / DSM 7513), this protein is Probable sphingosine-1-phosphate lyase.